A 279-amino-acid chain; its full sequence is MALKSYKPTTPGQRGLVLIDRSELWKGRPVKTLVEGLIKTGGRNNTGRVTMWHKGGGAKRLYRIVDFKRRKFDVPAVVERIEYDPNRTAFIALVRYEDGELAYILAPQRLAVGDSVVAGVKTDVKPGNAMPFSGMPIGTIVHNVELKPGKGGQLARAAGTYAQFVGRDGGYAQIRLSSGELRMVRQECMATVGAVSNPDNSNQNFGKAGRMRHKGVRPTVRGVAMNPIDHPHGGGEGRTSGGRHPVTPWGKGTKGNRTRKSKASDKLIVRSRHAKKKGR.

The interval 224-279 (AMNPIDHPHGGGEGRTSGGRHPVTPWGKGTKGNRTRKSKASDKLIVRSRHAKKKGR) is disordered. Residues 269–279 (VRSRHAKKKGR) show a composition bias toward basic residues.

It belongs to the universal ribosomal protein uL2 family. As to quaternary structure, part of the 50S ribosomal subunit. Forms a bridge to the 30S subunit in the 70S ribosome.

In terms of biological role, one of the primary rRNA binding proteins. Required for association of the 30S and 50S subunits to form the 70S ribosome, for tRNA binding and peptide bond formation. It has been suggested to have peptidyltransferase activity; this is somewhat controversial. Makes several contacts with the 16S rRNA in the 70S ribosome. This is Large ribosomal subunit protein uL2 from Cereibacter sphaeroides (strain ATCC 17029 / ATH 2.4.9) (Rhodobacter sphaeroides).